The following is an 815-amino-acid chain: Leucine--tRNA ligase (815 aa).

A 'HIGH' region motif is present at residues 42–52 (PYPSGRLHMGH). The 'KMSKS' region motif lies at 574-578 (KMSKS). Lys-577 is a binding site for ATP.

It belongs to the class-I aminoacyl-tRNA synthetase family.

The protein localises to the cytoplasm. It catalyses the reaction tRNA(Leu) + L-leucine + ATP = L-leucyl-tRNA(Leu) + AMP + diphosphate. The sequence is that of Leucine--tRNA ligase from Alcanivorax borkumensis (strain ATCC 700651 / DSM 11573 / NCIMB 13689 / SK2).